We begin with the raw amino-acid sequence, 384 residues long: 5-cytosine rRNA methyltransferase NSUN4 (384 aa).

The transit peptide at 1 to 25 (MAALVVRGVRDMLKRADFATVPRRQ) directs the protein to the mitochondrion. S-adenosyl-L-methionine-binding residues include Gly-185, Gly-186, Lys-187, and Asp-204. Ser-206 bears the Phosphoserine mark. S-adenosyl-L-methionine is bound by residues Arg-209, Asp-237, Gly-238, and Asp-255. Residue Cys-310 is the Nucleophile of the active site.

The protein belongs to the class I-like SAM-binding methyltransferase superfamily. RsmB/NOP family. As to quaternary structure, heterodimer with MTERFD2/MTERF4; this interaction seems to be required for NSUN4 recruitment to the mitochondrial large ribosomal subunit.

The protein localises to the mitochondrion. It carries out the reaction a cytidine in rRNA + S-adenosyl-L-methionine = a 5-methylcytidine in rRNA + S-adenosyl-L-homocysteine + H(+). The catalysed reaction is a cytidine in mRNA + S-adenosyl-L-methionine = a 5-methylcytidine in mRNA + S-adenosyl-L-homocysteine + H(+). Mitochondrial RNA cytosine C(5)-methyltransferase that methylates cytosine to 5-methylcytosine (m5C) in various RNAs, such as rRNAs, mRNAs and some long non-coding RNAs (lncRNAs). Involved in mitochondrial ribosome small subunit (SSU) maturation by catalyzing methylation of mitochondrial 12S rRNA; the function is independent of MTERFD2/MTERF4 and assembled mitochondrial ribosome large subunit (LSU). Targeted to LSU by MTERFD2/MTERF4 and probably is involved in a final step in ribosome biogenesis to ensure that SSU and LSU are assembled. In vitro can methylate 16S rRNA of the LSU; the methylation is enhanced by MTERFD/MTERF4. Also acts as a regulator of innate immunity by marking double-stranded mitochondrial RNAs(mt-dsRNAs) generated in response to stress: catalyzes m5C modification on mitochondrial RNAs, such as a mRNAs and lncRNAs, with a preference for the termini of light-strand lncRNAs, promoting their degradation and cytosolic release. Modified light-strand lncRNAs are then recognized by C1QBP reader and recruited to the mitochondrial degradosome complex, which promotes their degradation. This Bos taurus (Bovine) protein is 5-cytosine rRNA methyltransferase NSUN4 (NSUN4).